A 654-amino-acid polypeptide reads, in one-letter code: RING finger protein 112 (654 aa).

Residues 80-121 (CSICLERLREPISLDCGHDFCIRCFSTHRIPGCELPCCPECR) form an RING-type zinc finger. The interval 154 to 654 (AVRAERLLLV…GDREPLLQEE (501 aa)) is interaction with ZBTB16. A GB1/RHD3-type G domain is found at 189–420 (DTPVCLLAVL…YILDVLSTAP (232 aa)). A GTP-binding site is contributed by 340–341 (RD). Helical transmembrane passes span 570–590 (LAAVGGAVGAGLMGLAGGVVG) and 603–623 (GMVAAGAAVGATGAAVVGGGV).

Belongs to the TRAFAC class dynamin-like GTPase superfamily. GB1/RHD3 GTPase family. GB1 subfamily. As to quaternary structure, self-associates. Interacts with SP1 in an oxidative stress-regulated manner. Interacts with SIGMAR1 in an oxidative stress-regulated manner. Interacts with ZBTB16 (via C2H2-type zinc finger domains 1 and 2). Auto-ubiquitinated. In terms of tissue distribution, expressed in most of the brain areas, including cortex, striatum, hippocampus, thalamus, and cerebellum (at protein level). Expressed in lateral amygdaloid nucleus, and ventromedial hypothalamus. Also expressed strongly in the marginal zone of brain vesicles, optic stalk, and cartilage primordium.

It localises to the membrane. It is found in the cytoplasm. Its subcellular location is the nucleus. The protein localises to the nuclear body. The protein resides in the nucleoplasm. It localises to the endosome. It is found in the cytoplasmic vesicle. Its subcellular location is the secretory vesicle. The protein localises to the synaptic vesicle. The protein resides in the postsynaptic density. It localises to the perikaryon. It is found in the cell projection. Its subcellular location is the neuron projection. The catalysed reaction is S-ubiquitinyl-[E2 ubiquitin-conjugating enzyme]-L-cysteine + [acceptor protein]-L-lysine = [E2 ubiquitin-conjugating enzyme]-L-cysteine + N(6)-ubiquitinyl-[acceptor protein]-L-lysine.. Its pathway is protein modification; protein ubiquitination. Functionally, E3 ubiquitin-protein ligase that plays an important role in neuronal differentiation, including neurogenesis and gliogenesis, during brain development. During embryonic development initiates neuronal differentiation by inducing cell cycle arrest at the G0/G1 phase through up-regulation of cell-cycle regulatory proteins. Plays a role not only in the fetal period during the development of the nervous system, but also in the adult brain, where it is involved in the maintenance of neural functions and protection of the nervous tissue cells from oxidative stress-induced damage. Exhibits GTPase and E3 ubiquitin-protein ligase activities. Regulates dendritic spine density and synaptic neurotransmission; its ability to hydrolyze GTP is involved in the maintenance of dendritic spine density. The sequence is that of RING finger protein 112 (Rnf112) from Mus musculus (Mouse).